We begin with the raw amino-acid sequence, 316 residues long: Peroxisomal targeting signal 2 receptor (316 aa).

WD repeat units follow at residues 56–96 (DTRD…GGRP), 102–142 (EHTK…SLKT), 145–185 (EHRY…SLNT), 188–228 (AHDH…RPTT), 232–272 (GHTY…DPII), and 277–316 (HHTEFVVGLDWNMFIDGQMASCSWDEQVCVWNLGRPGQFR).

The protein belongs to the WD repeat peroxin-7 family. In terms of assembly, interacts with PEX5; interaction only takes place when PEX7 is associated with cargo proteins.

Its subcellular location is the cytoplasm. It localises to the cytosol. The protein resides in the peroxisome matrix. Receptor required for the peroxisomal import of proteins containing a C-terminal PTS2-type peroxisomal targeting signal. Specifically binds to cargo proteins containing a PTS2 peroxisomal targeting signal in the cytosol. Cargo protein-binding triggers interaction with PEX5 and formation of a ternary complex composed of PEX5 and PEX7 along with PTS2-containing cargo proteins, which is tranlocated into peroxisomes by passing through the PEX13-PEX14 docking complex. This Dictyostelium discoideum (Social amoeba) protein is Peroxisomal targeting signal 2 receptor (pex7).